The following is a 564-amino-acid chain: Probable beta-glucosidase btgE (564 aa).

The signal sequence occupies residues 1–18 (MRGAFLATAAAIAGTAMA). A disordered region spans residues 285-304 (ATSSVAPSSSPSKPAAPSGA). The N-linked (GlcNAc...) asparagine glycan is linked to Asn404. The active-site Proton donor is Glu405. Glu501 serves as the catalytic Nucleophile.

The protein belongs to the glycosyl hydrolase 17 family.

It localises to the secreted. It is found in the cell wall. The enzyme catalyses Hydrolysis of terminal, non-reducing beta-D-glucosyl residues with release of beta-D-glucose.. Its pathway is glycan metabolism; cellulose degradation. Beta-glucosidases are one of a number of cellulolytic enzymes involved in the degradation of cellulosic biomass. Catalyzes the last step releasing glucose from the inhibitory cellobiose. This chain is Probable beta-glucosidase btgE (btgE), found in Aspergillus clavatus (strain ATCC 1007 / CBS 513.65 / DSM 816 / NCTC 3887 / NRRL 1 / QM 1276 / 107).